Reading from the N-terminus, the 136-residue chain is MARTKQTARKSTGGKAPRKQLASKAARKAAPATGGVKKPHRYRPGTVALREIRRYQKSTELLIRKLPFQRLVREIAQDFKTDLRFQSSAIGALQEAVEAYLVSLFEDTNLCAIHGKRVTIQPKDMQLARRLRGERS.

The segment at 1-42 is disordered; it reads MARTKQTARKSTGGKAPRKQLASKAARKAAPATGGVKKPHRY. Lys-5 is modified (N6,N6,N6-trimethyllysine; alternate). An N6,N6-dimethyllysine; alternate modification is found at Lys-5. An N6-methyllysine; alternate mark is found at Lys-5 and Lys-10. Lys-10 carries the N6-acetyllysine; alternate modification. Ser-11 carries the post-translational modification Phosphoserine. Lys-15 is subject to N6,N6-dimethyllysine; alternate. N6-acetyllysine; alternate occurs at positions 15, 19, 24, 28, and 37. Lys-19, Lys-24, Lys-28, and Lys-37 each carry N6-methyllysine; alternate. Over residues 19-32 the composition is skewed to low complexity; the sequence is KQLASKAARKAAPA. N6,N6,N6-trimethyllysine; alternate occurs at positions 28 and 37. Residues Lys-28 and Lys-37 each carry the N6,N6-dimethyllysine; alternate modification. N6-acetyllysine is present on residues Lys-57 and Lys-65. An N6,N6,N6-trimethyllysine; alternate modification is found at Lys-80. Lys-80 carries the N6,N6-dimethyllysine; alternate modification. Lys-80 carries the post-translational modification N6-methyllysine; alternate.

The protein belongs to the histone H3 family. In terms of assembly, the nucleosome is a histone octamer containing two molecules each of H2A, H2B, H3 and H4 assembled in one H3-H4 heterotetramer and two H2A-H2B heterodimers. The octamer wraps approximately 147 bp of DNA. Post-translationally, phosphorylated by ark1 to form H3S10ph in a cell cycle-dependent manner during mitosis and meiosis. H3S10ph is also formed by ssp2, promotes subsequent H3K14ac formation by gcn5, and is required for transcriptional activation through TBP recruitment to the promoters. Dephosphorylation is performed by sds21. In terms of processing, mono-, di- and trimethylated by the COMPASS complex to form H3K4me1/2/3. H3K4me activates gene expression by regulating transcription elongation and plays a role in telomere length maintenance. H3K4me enrichment correlates with transcription levels, and occurs in a 5' to 3' gradient with H3K4me3 enrichment at the 5'-end of genes, shifting to H3K4me2 and then H3K4me1. Methylated by clr4 to form H3K9me1. H3K9me1 represents a specific tag for epigenetic transcriptional repression by recruiting swi6/HP1 to methylated histones. Targeting to histone probably involves clr3 and rik1. Essential for silencing of centromeres and directional switching of the mating type. Methylated by set2 to form H3K36me. H3K36me represses gene expression. Methylated by dot1 to form H3K79me. H3K79me is required for association of SIR proteins with telomeric regions and for telomeric silencing. The COMPASS-mediated formation of H3K4me2/3 and the dot1-mediated formation of H3K79me require H2BK123ub1. Acetylation of histone H3 leads to transcriptional activation. H3K14ac formation by gcn5 is promoted by H3S10ph. H3K14ac can also be formed by esa1. H3K56ac formation occurs predominantly in newly synthesized H3 molecules during G1, S and G2/M of the cell cycle and may be involved in DNA repair.

The protein resides in the nucleus. It is found in the chromosome. In terms of biological role, core component of nucleosome. Nucleosomes wrap and compact DNA into chromatin, limiting DNA accessibility to the cellular machineries which require DNA as a template. Histones thereby play a central role in transcription regulation, DNA repair, DNA replication and chromosomal stability. DNA accessibility is regulated via a complex set of post-translational modifications of histones, also called histone code, and nucleosome remodeling. In Schizosaccharomyces pombe (strain 972 / ATCC 24843) (Fission yeast), this protein is Histone H3.1/H3.2 (hht1).